A 505-amino-acid chain; its full sequence is uncharacterized protein (505 aa).

The chain crosses the membrane as a helical span at residues 11–27 (IGIIGGGIVGWLAAIAL).

It is found in the membrane. This is an uncharacterized protein from Sinorhizobium fredii (strain NBRC 101917 / NGR234).